Here is a 584-residue protein sequence, read N- to C-terminus: Transcription factor COE1 (584 aa).

N-acetylmethionine is present on Met1. Polar residues predominate over residues 1-14; sequence MFGIQESIQRSGSS. A disordered region spans residues 1 to 21; sequence MFGIQESIQRSGSSMKEEPLG. Residue Lys16 forms a Glycyl lysine isopeptide (Lys-Gly) (interchain with G-Cter in SUMO1); alternate linkage. Lys16 is covalently cross-linked (Glycyl lysine isopeptide (Lys-Gly) (interchain with G-Cter in SUMO2); alternate). The tract at residues 63-66 is interaction with DNA; sequence RKSN. The segment at 151–170 adopts a C5-type zinc-finger fold; it reads CRVLLTHEIMCSRCCDKKSC. 2 interaction with DNA regions span residues 197–204 and 236–239; these read NCLKNAGN and NNSK. One can recognise an IPT/TIG domain in the interval 255–338; sequence PCIKAISPSE…KGTPGRFIYT (84 aa). Positions 450-473 are disordered; the sequence is GFTRNSSSVSPHGYVPSTTPQQTN.

This sequence belongs to the COE family. Homodimer. Interacts with ZNF423 and ZNF521, leading to prevent EBF1 to bind DNA and activate target genes. Interacts with CCR4-NOT component CNOT3. Expressed exclusively in olfactory receptor neurons and their precursors.

It is found in the nucleus. In terms of biological role, key pioneer transcription factor of B-cell specification and commitment. Recognizes variations of the palindromic sequence 5'-ATTCCCNNGGGAATT-3'. Operates in a transcription factor network to activate B-cell-specific genes and repress genes associated with alternative cell fates. For instance, positively regulates many B-cell specific genes including BCR or CD40 while repressing genes that direct cells into alternative lineages, including GATA3 and TCF7 for the T-cell lineage. In addition to its role during lymphopoiesis, controls the thermogenic gene program in adipocytes during development and in response to environmental cold. The protein is Transcription factor COE1 (Ebf1) of Rattus norvegicus (Rat).